The primary structure comprises 260 residues: 14-3-3-like protein C (260 aa).

The protein belongs to the 14-3-3 family.

The chain is 14-3-3-like protein C from Nicotiana tabacum (Common tobacco).